Here is a 225-residue protein sequence, read N- to C-terminus: LexA repressor (225 aa).

A DNA-binding region (H-T-H motif) is located at residues 26–46; sequence YEEMKDSLNLKSKSGIHRLIS. Residues S146 and K184 each act as for autocatalytic cleavage activity in the active site.

This sequence belongs to the peptidase S24 family. As to quaternary structure, homodimer.

It carries out the reaction Hydrolysis of Ala-|-Gly bond in repressor LexA.. Represses a number of genes involved in the response to DNA damage (SOS response), including recA and lexA. In the presence of single-stranded DNA, RecA interacts with LexA causing an autocatalytic cleavage which disrupts the DNA-binding part of LexA, leading to derepression of the SOS regulon and eventually DNA repair. The sequence is that of LexA repressor from Pelagibacter ubique (strain HTCC1062).